The sequence spans 428 residues: Glutamine synthetase leaf isozyme, chloroplastic (428 aa).

The N-terminal 49 residues, Met-1–Val-49, are a transit peptide targeting the chloroplast. One can recognise a GS beta-grasp domain in the interval Ile-75–Gly-155. Residues Pro-159–Val-428 enclose the GS catalytic domain.

The protein belongs to the glutamine synthetase family. In terms of assembly, homooctamer.

The protein localises to the plastid. It localises to the chloroplast. The catalysed reaction is L-glutamate + NH4(+) + ATP = L-glutamine + ADP + phosphate + H(+). Its function is as follows. The light-modulated chloroplast enzyme, encoded by a nuclear gene and expressed primarily in leaves, is responsible for the reassimilation of the ammonia generated by photorespiration. In Medicago sativa (Alfalfa), this protein is Glutamine synthetase leaf isozyme, chloroplastic (GS2).